A 963-amino-acid chain; its full sequence is uncharacterized protein (963 aa).

2 coiled-coil regions span residues 176–236 and 373–467; these read NGRN…HIRM and DYEW…KKTV. A helical membrane pass occupies residues 468 to 488; that stretch reads IAAGMLFIVLFSLLQQWIPAI. Coiled coils occupy residues 536–570 and 647–789; these read RNKQ…AEMA and ALHT…LEAS.

Its subcellular location is the cell membrane. This is an uncharacterized protein from Bacillus subtilis (strain 168).